Reading from the N-terminus, the 632-residue chain is 1-deoxy-D-xylulose-5-phosphate synthase (632 aa).

Thiamine diphosphate contacts are provided by residues H74 and 115 to 117 (AHS). D146 is a binding site for Mg(2+). Thiamine diphosphate-binding positions include 147-148 (GA), N176, Y283, and E365. Residue N176 participates in Mg(2+) binding.

It belongs to the transketolase family. DXPS subfamily. In terms of assembly, homodimer. Mg(2+) is required as a cofactor. Requires thiamine diphosphate as cofactor.

It catalyses the reaction D-glyceraldehyde 3-phosphate + pyruvate + H(+) = 1-deoxy-D-xylulose 5-phosphate + CO2. It participates in metabolic intermediate biosynthesis; 1-deoxy-D-xylulose 5-phosphate biosynthesis; 1-deoxy-D-xylulose 5-phosphate from D-glyceraldehyde 3-phosphate and pyruvate: step 1/1. Functionally, catalyzes the acyloin condensation reaction between C atoms 2 and 3 of pyruvate and glyceraldehyde 3-phosphate to yield 1-deoxy-D-xylulose-5-phosphate (DXP). This is 1-deoxy-D-xylulose-5-phosphate synthase from Paraburkholderia phymatum (strain DSM 17167 / CIP 108236 / LMG 21445 / STM815) (Burkholderia phymatum).